The primary structure comprises 187 residues: UPF0340 protein str1894 (187 aa).

This sequence belongs to the UPF0340 family.

The chain is UPF0340 protein str1894 from Streptococcus thermophilus (strain CNRZ 1066).